The primary structure comprises 209 residues: Large ribosomal subunit protein uL3 (209 aa).

The protein belongs to the universal ribosomal protein uL3 family. As to quaternary structure, part of the 50S ribosomal subunit. Forms a cluster with proteins L14 and L19.

One of the primary rRNA binding proteins, it binds directly near the 3'-end of the 23S rRNA, where it nucleates assembly of the 50S subunit. The sequence is that of Large ribosomal subunit protein uL3 from Pelobacter propionicus (strain DSM 2379 / NBRC 103807 / OttBd1).